The sequence spans 101 residues: Ubiquitin-related modifier 1 (101 aa).

Glycine 101 bears the 1-thioglycine mark. Residue glycine 101 forms a Glycyl lysine isopeptide (Gly-Lys) (interchain with K-? in acceptor proteins) linkage.

Belongs to the URM1 family. Post-translationally, C-terminal thiocarboxylation occurs in 2 steps, it is first acyl-adenylated (-COAMP) via the hesA/moeB/thiF part of UBA4, then thiocarboxylated (-COSH) via the rhodanese domain of UBA4.

It is found in the cytoplasm. The protein operates within tRNA modification; 5-methoxycarbonylmethyl-2-thiouridine-tRNA biosynthesis. Acts as a sulfur carrier required for 2-thiolation of mcm(5)S(2)U at tRNA wobble positions of cytosolic tRNA(Lys), tRNA(Glu) and tRNA(Gln). Serves as sulfur donor in tRNA 2-thiolation reaction by being thiocarboxylated (-COSH) at its C-terminus by the MOCS3 homolog UBA4. The sulfur is then transferred to tRNA to form 2-thiolation of mcm(5)S(2)U. Prior mcm(5) tRNA modification by the elongator complex is required for 2-thiolation. Also acts as a ubiquitin-like protein (UBL) that is covalently conjugated via an isopeptide bond to lysine residues of target proteins such as AHP1. The thiocarboxylated form serves as substrate for conjugation and oxidative stress specifically induces the formation of UBL-protein conjugates. The polypeptide is Ubiquitin-related modifier 1 (Scheffersomyces stipitis (strain ATCC 58785 / CBS 6054 / NBRC 10063 / NRRL Y-11545) (Yeast)).